The chain runs to 151 residues: Deoxyuridine 5'-triphosphate nucleotidohydrolase (151 aa).

Substrate is bound by residues 69–71, N82, and 86–88; these read RSG and TID.

It belongs to the dUTPase family. Mg(2+) serves as cofactor.

It catalyses the reaction dUTP + H2O = dUMP + diphosphate + H(+). The protein operates within pyrimidine metabolism; dUMP biosynthesis; dUMP from dCTP (dUTP route): step 2/2. This enzyme is involved in nucleotide metabolism: it produces dUMP, the immediate precursor of thymidine nucleotides and it decreases the intracellular concentration of dUTP so that uracil cannot be incorporated into DNA. The sequence is that of Deoxyuridine 5'-triphosphate nucleotidohydrolase from Rhodospirillum centenum (strain ATCC 51521 / SW).